The following is a 349-amino-acid chain: Quinolinate synthase (349 aa).

The iminosuccinate site is built by His52 and Ser69. Cys114 serves as a coordination point for [4Fe-4S] cluster. Iminosuccinate contacts are provided by residues 140-142 (YVN) and Ser157. Cys201 is a [4Fe-4S] cluster binding site. Residues 227 to 229 (HPE) and Thr255 contribute to the iminosuccinate site. Cys300 is a [4Fe-4S] cluster binding site.

It belongs to the quinolinate synthase family. Type 2 subfamily. It depends on [4Fe-4S] cluster as a cofactor.

It is found in the cytoplasm. It catalyses the reaction iminosuccinate + dihydroxyacetone phosphate = quinolinate + phosphate + 2 H2O + H(+). It functions in the pathway cofactor biosynthesis; NAD(+) biosynthesis; quinolinate from iminoaspartate: step 1/1. Functionally, catalyzes the condensation of iminoaspartate with dihydroxyacetone phosphate to form quinolinate. This is Quinolinate synthase from Mycobacterium bovis (strain BCG / Tokyo 172 / ATCC 35737 / TMC 1019).